Reading from the N-terminus, the 719-residue chain is Lanosterol synthase (719 aa).

One copy of the PFTB 1 repeat lies at 118–160 (RIEVIRYLVNHANPEDGGWGIHIEGKSTVFGTALNYVVLRILG). D451 serves as the catalytic Proton donor. PFTB repeat units follow at residues 478–523 (LKDS…MIEH), 555–595 (VKNA…SCVK), and 604–645 (SRRA…VVQT).

The protein belongs to the terpene cyclase/mutase family.

It catalyses the reaction (S)-2,3-epoxysqualene = lanosterol. Its pathway is terpene metabolism; lanosterol biosynthesis; lanosterol from farnesyl diphosphate: step 3/3. In terms of biological role, catalyzes the cyclization of (S)-2,3 oxidosqualene to lanosterol, a reaction that forms the sterol nucleus. This is Lanosterol synthase (ERG7) from Pneumocystis carinii.